The primary structure comprises 363 residues: tRNA N6-adenosine threonylcarbamoyltransferase (363 aa).

Fe cation contacts are provided by His-121 and His-125. Residues 143–147 (LASGG), Asp-176, Gly-189, and Asn-287 each bind substrate. Asp-315 contributes to the Fe cation binding site.

The protein belongs to the KAE1 / TsaD family. The cofactor is Fe(2+).

The protein localises to the cytoplasm. It carries out the reaction L-threonylcarbamoyladenylate + adenosine(37) in tRNA = N(6)-L-threonylcarbamoyladenosine(37) in tRNA + AMP + H(+). Functionally, required for the formation of a threonylcarbamoyl group on adenosine at position 37 (t(6)A37) in tRNAs that read codons beginning with adenine. Is involved in the transfer of the threonylcarbamoyl moiety of threonylcarbamoyl-AMP (TC-AMP) to the N6 group of A37, together with TsaE and TsaB. TsaD likely plays a direct catalytic role in this reaction. In Rhodopseudomonas palustris (strain TIE-1), this protein is tRNA N6-adenosine threonylcarbamoyltransferase.